The primary structure comprises 342 residues: GTPase Obg (342 aa).

Positions 1–159 (MKFLDLCKVY…RTIWLRLKLI (159 aa)) constitute an Obg domain. In terms of domain architecture, OBG-type G spans 160–327 (ADAGLLGLPN…VLRALWAEID (168 aa)). GTP contacts are provided by residues 166–173 (GLPNAGKS), 191–195 (FTTLV), 212–215 (DIPG), 279–282 (NKID), and 308–310 (SGV). Mg(2+) contacts are provided by Ser-173 and Thr-193.

It belongs to the TRAFAC class OBG-HflX-like GTPase superfamily. OBG GTPase family. As to quaternary structure, monomer. The cofactor is Mg(2+).

The protein resides in the cytoplasm. Functionally, an essential GTPase which binds GTP, GDP and possibly (p)ppGpp with moderate affinity, with high nucleotide exchange rates and a fairly low GTP hydrolysis rate. Plays a role in control of the cell cycle, stress response, ribosome biogenesis and in those bacteria that undergo differentiation, in morphogenesis control. The protein is GTPase Obg of Cereibacter sphaeroides (strain ATCC 17029 / ATH 2.4.9) (Rhodobacter sphaeroides).